A 561-amino-acid chain; its full sequence is Cytochrome P450 monooxygenase iboC (561 aa).

Residues 8 to 28 (RFYYQLLAAVLIPALFVAWAA) form a helical membrane-spanning segment. Cys484 is a heme binding site.

This sequence belongs to the cytochrome P450 family. Requires heme as cofactor.

The protein localises to the membrane. Its pathway is secondary metabolite biosynthesis. Functionally, cytochrome P450 monooxygenase; part of the gene cluster that mediates the biosynthesis of the psychoactive metabolites ibotenic acid and muscimol. The first committed step is glutamate hydroxylation by the 2-oxoglutarate-dependent dioxygenase iboH, and the last step is decarboxylation of ibotenic acid to muscimol by the decarboxylase iboD. The order of the intermediate reactions is somewhat ambiguous. IboA likely activates the carboxylic acid at position 5 to introduce an amide bond, and the flavin monooxygenase iboF generates the N-O bond. There are several options for the latter step. One option is that iboF directly hydroxylates the amide nitrogen formed by iboA to produce a hydroxamic acid species. Another option is that iboF hydroxylates an external N-containing compound, whose resulting N-O bond is subsequently introduced into the hydroxyglutamate scaffold. The paralogous PLP-dependent cystathionine gamma-synthase-like enzymes iboG1 and iboG2 are likely involved in substitution of the OH group at position 3 by the O-N moiety. The first cyclic intermediate is most probably tricholomic acid which is likely desaturated to ibotenic acid by the cytochrome P450 monooxygenase iboC. In Amanita muscaria (strain Koide BX008), this protein is Cytochrome P450 monooxygenase iboC.